We begin with the raw amino-acid sequence, 253 residues long: Sugar fermentation stimulation protein homolog (253 aa).

This sequence belongs to the SfsA family.

This chain is Sugar fermentation stimulation protein homolog, found in Prochlorococcus marinus (strain NATL1A).